The following is a 446-amino-acid chain: Argininosuccinate synthase (446 aa).

Residues Ala-17–Ser-25 and Ala-43 contribute to the ATP site. Residue Tyr-99 coordinates L-citrulline. ATP is bound by residues Gly-129 and Thr-131. Thr-131, Asn-135, and Asp-136 together coordinate L-aspartate. Asn-135 is a binding site for L-citrulline. Asp-136 serves as a coordination point for ATP. Arg-139 and Ser-192 together coordinate L-citrulline. Position 194 (Asp-194) interacts with ATP. Residues Thr-201, Glu-203, and Glu-280 each contribute to the L-citrulline site.

The protein belongs to the argininosuccinate synthase family. Type 2 subfamily. As to quaternary structure, homotetramer.

It is found in the cytoplasm. The enzyme catalyses L-citrulline + L-aspartate + ATP = 2-(N(omega)-L-arginino)succinate + AMP + diphosphate + H(+). It functions in the pathway amino-acid biosynthesis; L-arginine biosynthesis; L-arginine from L-ornithine and carbamoyl phosphate: step 2/3. The chain is Argininosuccinate synthase from Methylibium petroleiphilum (strain ATCC BAA-1232 / LMG 22953 / PM1).